The following is a 620-amino-acid chain: Translocator protein BipB (620 aa).

The disordered stretch occupies residues 58 to 95 (QCDAQPAAHDARLDDKPALRAPQERDAPPLGASDTGSR). Residues 66–84 (HDARLDDKPALRAPQERDA) are compositionally biased toward basic and acidic residues. Residues 309-339 (EMQAKREAELQKKSDEYQAQVKKAEEMQKTM) adopt a coiled-coil conformation. Helical transmembrane passes span 355–375 (FAAA…GLAL), 401–421 (AILK…LVAC), and 430–450 (LAGA…AAFV).

The protein belongs to the SctE/SipB/YopB family.

It localises to the secreted. The protein resides in the host membrane. Its function is as follows. Plays a role in the bacterium-induced formation of multinucleated giant cell (MNGC), which is formed after host cell fusion, as well as in the intercellular spreading of bacteria and in the induction of apoptosis in macrophages. May act in concert with other effector proteins to induce fusion of host cell membranes. The chain is Translocator protein BipB (bipB) from Burkholderia pseudomallei (strain 1710b).